Reading from the N-terminus, the 620-residue chain is 1-deoxy-D-xylulose-5-phosphate synthase (620 aa).

Thiamine diphosphate-binding positions include H80 and 121 to 123 (GHS). Residue D152 coordinates Mg(2+). Residues 153-154 (GA), N181, Y288, and E370 each bind thiamine diphosphate. Position 181 (N181) interacts with Mg(2+).

It belongs to the transketolase family. DXPS subfamily. Homodimer. The cofactor is Mg(2+). It depends on thiamine diphosphate as a cofactor.

It catalyses the reaction D-glyceraldehyde 3-phosphate + pyruvate + H(+) = 1-deoxy-D-xylulose 5-phosphate + CO2. The protein operates within metabolic intermediate biosynthesis; 1-deoxy-D-xylulose 5-phosphate biosynthesis; 1-deoxy-D-xylulose 5-phosphate from D-glyceraldehyde 3-phosphate and pyruvate: step 1/1. Catalyzes the acyloin condensation reaction between C atoms 2 and 3 of pyruvate and glyceraldehyde 3-phosphate to yield 1-deoxy-D-xylulose-5-phosphate (DXP). The polypeptide is 1-deoxy-D-xylulose-5-phosphate synthase (Enterobacter sp. (strain 638)).